Consider the following 491-residue polypeptide: Glutamyl-tRNA(Gln) amidotransferase subunit A (491 aa).

Catalysis depends on charge relay system residues Lys-78 and Ser-158. Ser-182 acts as the Acyl-ester intermediate in catalysis.

The protein belongs to the amidase family. GatA subfamily. Heterotrimer of A, B and C subunits.

It carries out the reaction L-glutamyl-tRNA(Gln) + L-glutamine + ATP + H2O = L-glutaminyl-tRNA(Gln) + L-glutamate + ADP + phosphate + H(+). Allows the formation of correctly charged Gln-tRNA(Gln) through the transamidation of misacylated Glu-tRNA(Gln) in organisms which lack glutaminyl-tRNA synthetase. The reaction takes place in the presence of glutamine and ATP through an activated gamma-phospho-Glu-tRNA(Gln). This chain is Glutamyl-tRNA(Gln) amidotransferase subunit A, found in Nitrobacter hamburgensis (strain DSM 10229 / NCIMB 13809 / X14).